The primary structure comprises 757 residues: Maltose phosphorylase (757 aa).

Position 354–355 (354–355) interacts with substrate; that stretch reads WD. The Proton donor role is filled by Glu483. 588 to 589 is a binding site for substrate; it reads KQ.

Belongs to the glycosyl hydrolase 65 family.

The catalysed reaction is D-maltose + phosphate = beta-D-glucose 1-phosphate + D-glucose. It functions in the pathway glycan degradation; maltose degradation. Its function is as follows. Catalyzes the phosphorolysis of maltose, leading to the formation of glucose and glucose 1-P. In Bacillus subtilis (strain 168), this protein is Maltose phosphorylase (mdxK).